The chain runs to 154 residues: Interleukin-2 (154 aa).

A signal peptide spans 1 to 20 (MYKIQLLSCIALTLILVTNS). A disulfide bond links Cys-78 and Cys-126. Asn-111 carries N-linked (GlcNAc...) asparagine glycosylation.

It belongs to the IL-2 family.

It is found in the secreted. Cytokine produced by activated CD4-positive helper T-cells and to a lesser extend activated CD8-positive T-cells and natural killer (NK) cells that plays pivotal roles in the immune response and tolerance. Binds to a receptor complex composed of either the high-affinity trimeric IL-2R (IL2RA/CD25, IL2RB/CD122 and IL2RG/CD132) or the low-affinity dimeric IL-2R (IL2RB and IL2RG). Interaction with the receptor leads to oligomerization and conformation changes in the IL-2R subunits resulting in downstream signaling starting with phosphorylation of JAK1 and JAK3. In turn, JAK1 and JAK3 phosphorylate the receptor to form a docking site leading to the phosphorylation of several substrates including STAT5. This process leads to activation of several pathways including STAT, phosphoinositide-3-kinase/PI3K and mitogen-activated protein kinase/MAPK pathways. Functions as a T-cell growth factor and can increase NK-cell cytolytic activity as well. Promotes strong proliferation of activated B-cells and subsequently immunoglobulin production. Plays a pivotal role in regulating the adaptive immune system by controlling the survival and proliferation of regulatory T-cells, which are required for the maintenance of immune tolerance. Moreover, participates in the differentiation and homeostasis of effector T-cell subsets, including Th1, Th2, Th17 as well as memory CD8-positive T-cells. In Felis catus (Cat), this protein is Interleukin-2 (IL2).